A 512-amino-acid polypeptide reads, in one-letter code: Keratin, type I cytoskeletal 24 (512 aa).

Residues 1-21 (MFCSAQKGSCSSRVSSSGAVG) form a disordered region. A head region spans residues 1 to 140 (MFCSAQKGSC…GYDGGLLSGS (140 aa)). Positions 8-21 (GSCSSRVSSSGAVG) are enriched in low complexity. The coil 1A stretch occupies residues 141 to 176 (EKQTMQDLNDRLANYLDKVRALEEANTDLECKIKDW). Positions 141–455 (EKQTMQDLND…RLLNGDGGGC (315 aa)) constitute an IF rod domain. Residues 177 to 197 (YGKHGSVKGGSGRDYSQYYSI) are linker 1. Residues 198 to 289 (IEDLKKQILS…KNHEEEMKCM (92 aa)) form a coil 1B region. Residues 290–312 (QGSSGGDVTVEMNAAPGVDLTKL) form a linker 12 region. Residues 313 to 451 (LNDMRAQYEA…ETYRRLLNGD (139 aa)) are coil 2. Residues 452–512 (GGGCDYRNLV…VSNISEVKIK (61 aa)) form a tail region.

This sequence belongs to the intermediate filament family. As to quaternary structure, heterotetramer of two type I and two type II keratins.

In Mus musculus (Mouse), this protein is Keratin, type I cytoskeletal 24 (Krt24).